The sequence spans 397 residues: Elongation factor Tu (397 aa).

In terms of domain architecture, tr-type G spans 10–206 (KPHVNIGTIG…AVDEYIPTPE (197 aa)). The tract at residues 19 to 26 (GHIDHGKT) is G1. A GTP-binding site is contributed by 19–26 (GHIDHGKT). Residue Thr26 participates in Mg(2+) binding. The interval 62–66 (GITIS) is G2. Residues 83–86 (DCPG) form a G3 region. Residues 83 to 87 (DCPGH) and 138 to 141 (NKCD) contribute to the GTP site. The tract at residues 138–141 (NKCD) is G4. The interval 176–178 (AAF) is G5.

Belongs to the TRAFAC class translation factor GTPase superfamily. Classic translation factor GTPase family. EF-Tu/EF-1A subfamily. In terms of assembly, monomer.

It is found in the cytoplasm. The enzyme catalyses GTP + H2O = GDP + phosphate + H(+). In terms of biological role, GTP hydrolase that promotes the GTP-dependent binding of aminoacyl-tRNA to the A-site of ribosomes during protein biosynthesis. This chain is Elongation factor Tu, found in Nocardioides sp. (strain ATCC BAA-499 / JS614).